Consider the following 156-residue polypeptide: Arginine repressor (156 aa).

Belongs to the ArgR family.

The protein localises to the cytoplasm. The protein operates within amino-acid biosynthesis; L-arginine biosynthesis [regulation]. Regulates arginine biosynthesis genes. The protein is Arginine repressor of Yersinia pseudotuberculosis serotype I (strain IP32953).